The primary structure comprises 320 residues: GTP 3',8-cyclase (320 aa).

Residues 4-226 (TFQRSINYMR…PIITDATSPA (223 aa)) enclose the Radical SAM core domain. R13 is a binding site for GTP. Positions 20 and 24 each coordinate [4Fe-4S] cluster. An S-adenosyl-L-methionine-binding site is contributed by Y26. C27 contacts [4Fe-4S] cluster. Residue R63 coordinates GTP. An S-adenosyl-L-methionine-binding site is contributed by G67. A GTP-binding site is contributed by T94. S118 contacts S-adenosyl-L-methionine. K155 lines the GTP pocket. M189 contributes to the S-adenosyl-L-methionine binding site. [4Fe-4S] cluster contacts are provided by C249 and C252. 254-256 (RIR) serves as a coordination point for GTP. C266 lines the [4Fe-4S] cluster pocket.

The protein belongs to the radical SAM superfamily. MoaA family. In terms of assembly, monomer and homodimer. The cofactor is [4Fe-4S] cluster.

The catalysed reaction is GTP + AH2 + S-adenosyl-L-methionine = (8S)-3',8-cyclo-7,8-dihydroguanosine 5'-triphosphate + 5'-deoxyadenosine + L-methionine + A + H(+). It participates in cofactor biosynthesis; molybdopterin biosynthesis. In terms of biological role, catalyzes the cyclization of GTP to (8S)-3',8-cyclo-7,8-dihydroguanosine 5'-triphosphate. The protein is GTP 3',8-cyclase of Alkaliphilus metalliredigens (strain QYMF).